A 307-amino-acid polypeptide reads, in one-letter code: Furaquinocin biosynthesis prenyltransferase (307 aa).

The protein belongs to the aromatic prenyltransferase family. As to quaternary structure, monomer.

It catalyses the reaction 2-O,3-dimethylflaviolin + (2E)-geranyl diphosphate = 6-linalyl-2-O,3-dimethylflaviolin + diphosphate. It carries out the reaction 2-O,3-dimethylflaviolin + (2E)-geranyl diphosphate + H(+) = 7-O-geranyl-2-O,3-dimethylflaviolin + diphosphate. Does not require any metal cations for activity. Involved in the biosynthesis of furaquinocin. Catalyzes the transfer of a geranyl group to 2-methoxy-3-methyl-flaviolin to yield 6-prenyl-2-methoxy-3-methyl-flaviolin and 7-O-geranyl-2-methoxy-3-methyl-flaviolin in a 10:1 ratio. Can also use other substrates such as flaviolin or 1,3-dihydroxy naphthalene, and can also use DMAPP as prenyl donor. This Streptomyces sp. (strain KO-3988) protein is Furaquinocin biosynthesis prenyltransferase.